Reading from the N-terminus, the 422-residue chain is Dioxygenase str8 (422 aa).

Zn(2+) contacts are provided by C73, C75, C78, and H119. Positions 243, 245, and 382 each coordinate Fe cation.

It belongs to the gamma-BBH/TMLD family. Requires Fe(2+) as cofactor.

It functions in the pathway mycotoxin biosynthesis. Functionally, dioxygenase; part of the gene cluster that mediates the biosynthesis of strobilurin A, an antifungal polyketide that contains a key beta-methoxyacrylate toxophore that targets the complex III of the mitochondrial electron transport chain. Strobilurin biosynthesis begins with construction of benzoyl CoA by step-wise elimination of ammonia from phenylalanine by the phenylalanine ammonia-lyase str11, oxygenation by str8 and retro-Claisen reaction to form benzoic acid, which is activated to its CoA thiolester benzoyl CoA by the dedicated CoA ligase str10. Benzoyl CoA forms the starter unit for the highly reducing polyketide synthase stpks1 that produces the polyketide prestrobilutin A. The FAD-dependent oxygenase str9 then catalyzes the key oxidative rearrangement responsible for the creation of the beta-methoxyacrylate toxophore. Str9 performs epoxidation of the 2,3 olefin of prestrobilutin A, followed by Meinwald rearrangement to furnish the aldehyde intermediate. Rapid enolization of the aldehyde intermediate would give the beta-methoxyacrylate skeleton and methylations catalyzed by str2 and str3 complete the synthesis and lead to the production of strobilurin A. The short-chain dehydrogenase stl2 and the dehydrogenase str4 play a role in the shunt pathway leading to the production of bolineol. The cluster encodes no obvious halogenase gene that could be involved in production of strobilurin B, nor any obvious dimethylallyl-transferase that could be involved in the production of strobilurin G. It is possible that unknown proteins encoded in, or near, the cluster (such as str1 or stl1) may form new classes of halogenases or dimethylally-transferases, or that the responsible genes are located elsewhere on the genome. Similarly, proteins encoded by str5/str6 hydrolases appear to have no chemical role in the biosynthesis of strobilurin A. Finally, no obvious self-resistance gene is found within the cluster. This chain is Dioxygenase str8, found in Strobilurus tenacellus.